The sequence spans 40 residues: Large ribosomal subunit protein bL36B (40 aa).

It belongs to the bacterial ribosomal protein bL36 family.

This is Large ribosomal subunit protein bL36B from Arthrobacter sp. (strain FB24).